The sequence spans 172 residues: Cytidylate kinase (172 aa).

Residue 8 to 16 (GPPGSGKST) participates in ATP binding.

Belongs to the cytidylate kinase family. Type 2 subfamily.

Its subcellular location is the cytoplasm. It catalyses the reaction CMP + ATP = CDP + ADP. The enzyme catalyses dCMP + ATP = dCDP + ADP. In Ignicoccus hospitalis (strain KIN4/I / DSM 18386 / JCM 14125), this protein is Cytidylate kinase.